The chain runs to 626 residues: DNA mismatch repair protein MutL (626 aa).

It belongs to the DNA mismatch repair MutL/HexB family.

Functionally, this protein is involved in the repair of mismatches in DNA. It is required for dam-dependent methyl-directed DNA mismatch repair. May act as a 'molecular matchmaker', a protein that promotes the formation of a stable complex between two or more DNA-binding proteins in an ATP-dependent manner without itself being part of a final effector complex. This Chlorobium luteolum (strain DSM 273 / BCRC 81028 / 2530) (Pelodictyon luteolum) protein is DNA mismatch repair protein MutL.